The chain runs to 478 residues: Catalase (478 aa).

Residues 1-23 form a disordered region; it reads MTNQLTTNEGQPWADNQHSQTAG. Catalysis depends on residues H53 and N126. A heme-binding site is contributed by Y336.

Belongs to the catalase family. Heme serves as cofactor.

The protein resides in the cytoplasm. The catalysed reaction is 2 H2O2 = O2 + 2 H2O. Decomposes hydrogen peroxide into water and oxygen; serves to protect cells from the toxic effects of hydrogen peroxide. This Latilactobacillus sakei (Lactobacillus sakei) protein is Catalase (katA).